Reading from the N-terminus, the 62-residue chain is MAKKLKIKLVKSPIGYNRRQRATLKALGLRKISDEVVHDDSPQIRGMINAVIHMLEVKEIEN.

It belongs to the universal ribosomal protein uL30 family. In terms of assembly, part of the 50S ribosomal subunit.

In Kosmotoga olearia (strain ATCC BAA-1733 / DSM 21960 / TBF 19.5.1), this protein is Large ribosomal subunit protein uL30.